Reading from the N-terminus, the 283-residue chain is N-terminal Xaa-Pro-Lys N-methyltransferase 2 (283 aa).

S-adenosyl-L-methionine is bound by residues Gly-124, Arg-129, Asp-146, 174–175 (LQ), and Gln-190.

It belongs to the methyltransferase superfamily. NTM1 family.

The protein localises to the nucleus. The enzyme catalyses N-terminal L-alanyl-L-prolyl-L-lysyl-[protein] + S-adenosyl-L-methionine = N-terminal N-methyl-L-alanyl-L-prolyl-L-lysyl-[protein] + S-adenosyl-L-homocysteine + H(+). It catalyses the reaction N-terminal L-prolyl-L-prolyl-L-lysyl-[protein] + S-adenosyl-L-methionine = N-terminal N-methyl-L-prolyl-L-prolyl-L-lysyl-[protein] + S-adenosyl-L-homocysteine + H(+). It carries out the reaction N-terminal L-seryl-L-prolyl-L-lysyl-[protein] + S-adenosyl-L-methionine = N-terminal N-methyl-L-seryl-L-prolyl-L-lysyl-[protein] + S-adenosyl-L-homocysteine + H(+). In terms of biological role, alpha N-methyltransferase that methylates the N-terminus of target proteins containing the N-terminal motif [Ala/Pro/Ser]-Pro-Lys when the initiator Met is cleaved. Specifically catalyzes monomethylation of exposed alpha-amino group of Ala or Ser residue in the [Ala/Ser]-Pro-Lys motif and Pro in the Pro-Pro-Lys motif. Predominantly functions as a mono-methyltransferase but is also able to di-/tri-methylate the GPKRIA peptide and di-methylate the PPKRIA peptide (in vitro). May activate NTMT1 by priming its substrates for trimethylation. This is N-terminal Xaa-Pro-Lys N-methyltransferase 2 (Ntmt2) from Rattus norvegicus (Rat).